The sequence spans 262 residues: Indole-3-glycerol phosphate synthase (262 aa).

It belongs to the TrpC family.

It catalyses the reaction 1-(2-carboxyphenylamino)-1-deoxy-D-ribulose 5-phosphate + H(+) = (1S,2R)-1-C-(indol-3-yl)glycerol 3-phosphate + CO2 + H2O. It participates in amino-acid biosynthesis; L-tryptophan biosynthesis; L-tryptophan from chorismate: step 4/5. The sequence is that of Indole-3-glycerol phosphate synthase from Staphylococcus epidermidis (strain ATCC 35984 / DSM 28319 / BCRC 17069 / CCUG 31568 / BM 3577 / RP62A).